The sequence spans 333 residues: Nuclear egress protein 1 (333 aa).

The interval 45 to 64 (SRRYKSVSRSGPSMRVRSRT) is disordered. The CCCH-type zinc finger occupies 128 to 251 (CLSLSGMGYH…YVIFPGKSVH (124 aa)).

This sequence belongs to the herpesviridae NEC1 protein family. Forms a heterohexameric complex with NEC2. Interacts with capsid vertex specific component 2/CVC2; this interaction directs the capsid to the host inner nuclear membrane to initiate budding. Phosphorylated at serine residues in the N-terminus. This phosphorylation regulates the localization within the inner nuclear membrane.

It is found in the host nucleus inner membrane. Functionally, plays an essential role in virion nuclear egress, the first step of virion release from infected cell. Within the host nucleus, NEC1 interacts with the newly formed capsid through the vertexes and directs it to the inner nuclear membrane by associating with NEC2. Induces the budding of the capsid at the inner nuclear membrane as well as its envelopment into the perinuclear space. There, the NEC1/NEC2 complex promotes the fusion of the enveloped capsid with the outer nuclear membrane and the subsequent release of the viral capsid into the cytoplasm where it will reach the secondary budding sites in the host Golgi or trans-Golgi network. The sequence is that of Nuclear egress protein 1 from Varicella-zoster virus (strain Dumas) (HHV-3).